Here is a 327-residue protein sequence, read N- to C-terminus: Aldo-keto reductase FVEG_12638 (327 aa).

Position 51 (D51) interacts with NADP(+). Residue Y56 is the Proton donor of the active site. Position 122 (H122) interacts with substrate. NADP(+)-binding positions include 152-153 (SE), 202-212 (GPLGHGWLVED), and 286-294 (ENFTSRDIE).

This sequence belongs to the aldo/keto reductase family. Aldo/keto reductase 2 subfamily.

Its function is as follows. Aldo-keto reductase; part of the Fusarium detoxification of benzoxazolinone cluster 2 (FDB2) involved in the degradation of benzoxazolinones produced by the host plant. Maize, wheat, and rye produce the 2 benzoxazinone phytoanticipins 2,4-dihy-droxy-7-methoxy-1,4-benzoxazin-3-one (DIMBOA) and 2,4-dihydroxy-1,4-benzoxazin-3-one (DIBOA) that, due to their inherent instability once released, spontaneously degrade to the more stable corresponding benzoxazolinones, 6-methoxy-2-benzoxazolinone (MBOA) and 2-benzoxazolinone (BOA), respectively. The first step in the detoxification of benzoxazolinones involves the hydrolysis of the cyclic ester bond of benzoxazolinones by the FDB1 cluster gamma-lactamase MBL1 to aminophenols. MBL1 is able to convert BOA into 2-aminophenol (2-AP), as well as MBOA into 5-methoxy-2-aminophenol (2-AMP). The FDB2 cluster N-malonyltransferase FDB2/NAT1 then metabolizes aminophenols via N-malonylation to non-toxic malonamic acids. FDB2/NAT1 converts 2-AP into N-(2-hydroxyphenyl) malonamic acid (HPMA) and 2-AMP into N-(2-hydroxy-4-methoxyphenyl) malonamic acid (HMPMA). The duplicated dienlactone hydrolases DLH1 and DLH2 may provide redundant function for hydrolyzing the lactone moiety in the BOA molecule. The roles of the amidases an other enzymes encoded by the 2 FDB clusters have not been identified so far. This chain is Aldo-keto reductase FVEG_12638, found in Gibberella moniliformis (strain M3125 / FGSC 7600) (Maize ear and stalk rot fungus).